The chain runs to 1267 residues: Clustered mitochondria protein homolog (1267 aa).

TPR repeat units lie at residues 64 to 102 (YNLK…KPYN), 420 to 453 (YSFV…LNML), 716 to 749 (EAHE…MIKE), 795 to 830 (LVPL…IPAL), 904 to 939 (RSIC…KSRA), 1010 to 1043 (AEKY…YERV), and 1138 to 1171 (AYIK…FTKE). The Clu domain occupies 329-586 (PTNGPDYLRT…NTYPLDVEFA (258 aa)). The segment covering 1203–1219 (QQDQTAASGLKQQPQKS) has biased composition (polar residues). The disordered stretch occupies residues 1203-1267 (QQDQTAASGL…KSKSKGKNKK (65 aa)). Over residues 1224–1239 (NKKETTNPDLADKSVD) the composition is skewed to basic and acidic residues. A compositionally biased stretch (basic residues) spans 1254–1267 (KTTKKSKSKGKNKK).

It belongs to the CLU family. In terms of assembly, may associate with the eukaryotic translation initiation factor 3 (eIF-3) complex.

It localises to the cytoplasm. Functionally, mRNA-binding protein involved in proper cytoplasmic distribution of mitochondria. The chain is Clustered mitochondria protein homolog from Candida glabrata (strain ATCC 2001 / BCRC 20586 / JCM 3761 / NBRC 0622 / NRRL Y-65 / CBS 138) (Yeast).